The following is a 548-amino-acid chain: Ankyrin repeat domain-containing protein SOWAHA (548 aa).

Positions 1 to 19 are cleaved as a signal peptide; it reads MALAAAAAAAAAAAGVSQA. Positions 114 to 212 are disordered; sequence EDNCAPGAPH…PPTAQVPPQK (99 aa). Polar residues predominate over residues 136–153; sequence SAPSELQHTPETLPSEVT. A compositionally biased stretch (pro residues) spans 198–212; it reads GPEPAPPTAQVPPQK. Serine 258 is subject to Phosphoserine. 2 ANK repeats span residues 344-373 and 383-413; these read SGFT…RGGA and GGYT…QVHV. The interval 512-548 is disordered; that stretch reads PRKKTKIRGGLPSFTEISHRSTPGPLAGLVPSLPPPT.

The protein belongs to the SOWAH family.

The polypeptide is Ankyrin repeat domain-containing protein SOWAHA (Sowaha) (Mus musculus (Mouse)).